A 255-amino-acid polypeptide reads, in one-letter code: uncharacterized protein (255 aa).

The first 23 residues, 1 to 23 (MKRLNKLVLYISFLILVISFTAG), serve as a signal peptide directing secretion. Cys-24 carries N-palmitoyl cysteine lipidation. Cys-24 carries S-diacylglycerol cysteine lipidation.

Belongs to the staphylococcal tandem lipoprotein family.

Its subcellular location is the cell membrane. This is an uncharacterized protein from Staphylococcus aureus (strain NCTC 8325 / PS 47).